Reading from the N-terminus, the 354-residue chain is Histidinol-phosphate aminotransferase (354 aa).

N6-(pyridoxal phosphate)lysine is present on Lys-210.

Belongs to the class-II pyridoxal-phosphate-dependent aminotransferase family. Histidinol-phosphate aminotransferase subfamily. Homodimer. Pyridoxal 5'-phosphate serves as cofactor.

The enzyme catalyses L-histidinol phosphate + 2-oxoglutarate = 3-(imidazol-4-yl)-2-oxopropyl phosphate + L-glutamate. The protein operates within amino-acid biosynthesis; L-histidine biosynthesis; L-histidine from 5-phospho-alpha-D-ribose 1-diphosphate: step 7/9. In Clostridium botulinum (strain 657 / Type Ba4), this protein is Histidinol-phosphate aminotransferase.